The following is a 3072-amino-acid chain: E1A-binding protein p400 (3072 aa).

Residues 1-22 (MHHGSGPQNVQHQLQRSRSFTG) are compositionally biased toward polar residues. 3 disordered regions span residues 1–55 (MHHG…SPGY), 125–149 (PMSQ…LQNV), and 222–250 (LSQP…TGLQ). Residues 31 to 40 (PNLPPSPAAP) show a composition bias toward pro residues. Low complexity-rich tracts occupy residues 41–53 (FAPS…PQSP) and 125–136 (PMSQQVQTQSPT). A phosphoserine mark is found at Ser52 and Ser134. Residues Ser315 and Ser321 each carry the phosphoserine modification. 3 disordered regions span residues 485 to 519 (SLTG…KRPR), 544 to 601 (MPTV…ASVP), and 635 to 769 (APIP…SQDK). Low complexity predominate over residues 556 to 569 (QATQLTGQKQSQQQ). A compositionally biased stretch (polar residues) spans 570 to 583 (YDPSTGPPVQNAAS). A compositionally biased stretch (pro residues) spans 586-599 (TPPPQLPARLPPAS). Low complexity-rich tracts occupy residues 646-657 (PAPSSQPAQPAL), 668-682 (QTSQ…VAST), and 695-710 (SLPT…PVSG). Composition is skewed to polar residues over residues 724-741 (NRPS…TSRS) and 754-765 (SPAQNAASSQDG). Phosphoserine occurs at positions 735, 741, and 754. An HSA domain is found at 798–870 (LPKLQEAPRP…EQSRLRRIAA (73 aa)). The span at 914–928 (ESRLKGFDTSPEHSL) shows a compositional bias: basic and acidic residues. Disordered stretches follow at residues 914–952 (ESRL…EDEE) and 997–1024 (FQWP…DRES). A Phosphothreonine modification is found at Thr922. Residues Ser923, Ser927, and Ser940 each carry the phosphoserine modification. Position 944 is a phosphothreonine (Thr944). Residues 950–1364 (DEEETIEEEE…SVLSVLTRLQ (415 aa)) are interactions with RUVBL1 and RUVBL2. A phosphoserine mark is found at Ser1009 and Ser1010. Positions 1102 to 1267 (AKLYRKNLNG…WTMVHFLIPG (166 aa)) constitute a Helicase ATP-binding domain. Position 1115–1122 (1115–1122 (DEAGLGKT)) interacts with ATP. Residues 1218–1221 (DEMQ) carry the DEAD box-like motif. Position 1471 is an N6-acetyllysine (Lys1471). A disordered region spans residues 1473 to 1503 (EGRTVAFPSTHPPRMANTNTSTATPQGQVRG). The span at 1488–1499 (ANTNTSTATPQG) shows a compositional bias: polar residues. Phosphoserine is present on residues Ser1646 and Ser1650. Residues 1815–1972 (KLEALAILLQ…GNDYSMAFLT (158 aa)) enclose the Helicase C-terminal domain. Disordered regions lie at residues 2033-2062 (AQRS…DEEP) and 2203-2227 (KERK…GEAV). Over residues 2043–2053 (GSSSVAVSSDS) the composition is skewed to low complexity. An N6-acetyllysine mark is found at Lys2265 and Lys2272. One can recognise a Myb-like domain in the interval 2276–2345 (EPAQDSPDWL…QCRNRYENVI (70 aa)). The segment at 2440 to 2699 (KEKKALADQQ…QQQQQQQQQT (260 aa)) is interaction with ZNF42. A disordered region spans residues 2441-2534 (EKKALADQQK…PQSKGQPTMT (94 aa)). 2 stretches are compositionally biased toward low complexity: residues 2446–2455 (ADQQKAQQPP) and 2463–2478 (QQQQ…QQQQ). The span at 2479–2493 (QPPPPPQQPPPPVPQ) shows a compositional bias: pro residues. A compositionally biased stretch (low complexity) spans 2494 to 2526 (PQAASSQTPAGQPAVQPQPQPQVQTQPQPVQPQ). At Ser2614 the chain carries Phosphoserine. Disordered stretches follow at residues 2734 to 2790 (QKMQ…TGTT) and 3028 to 3072 (ASLQ…PPCQ). A compositionally biased stretch (pro residues) spans 2739-2754 (PPQPPPPQAQPGPPQQ). Residues 2755–2775 (PAQVQVQTPQPPQQQQSPQLT) are compositionally biased toward low complexity. Residues 3042–3053 (PASSDSPSQQPK) show a composition bias toward polar residues.

It belongs to the SNF2/RAD54 helicase family. SWR1 subfamily. In terms of assembly, component of the NuA4 histone acetyltransferase complex which contains the catalytic subunit KAT5/TIP60 and the subunits EP400, TRRAP/PAF400, BRD8/SMAP, EPC1, DMAP1/DNMAP1, RUVBL1/TIP49, RUVBL2, ING3, actin, ACTL6A/BAF53A, MORF4L1/MRG15, MORF4L2/MRGX, MRGBP, YEATS4/GAS41, VPS72/YL1 and MEAF6. May also participate in the formation of NuA4 related complexes which lack the KAT5/TIP60 catalytic subunit, but which include the SWI/SNF related protein SRCAP. The NuA4 complex interacts with MYC. EP400 interacts with TRRAP, RUVBL1 and RUVBL2. Component of a SWR1-like complex. Interacts with ZNF42. Interacts with PHF5A. Expressed in brain, thymus, lung, liver, spleen, kidney, colon and bone marrow.

Its subcellular location is the nucleus. In terms of biological role, component of the NuA4 histone acetyltransferase complex which is involved in transcriptional activation of select genes principally by acetylation of nucleosomal histones H4 and H2A. This modification may both alter nucleosome - DNA interactions and promote interaction of the modified histones with other proteins which positively regulate transcription. May be required for transcriptional activation of E2F1 and MYC target genes during cellular proliferation. The NuA4 complex ATPase and helicase activities seem to be, at least in part, contributed by the association of RUVBL1 and RUVBL2 with EP400. Component of a SWR1-like complex that specifically mediates the removal of histone H2A.Z/H2AZ1 from the nucleosome. Regulates transcriptional activity of ZNF42. The chain is E1A-binding protein p400 (Ep400) from Mus musculus (Mouse).